We begin with the raw amino-acid sequence, 619 residues long: Glucokinase regulatory protein (619 aa).

2 consecutive SIS domains span residues Val90–Asn283 and Thr319–Lys498. Cys107–Thr109 lines the keto-D-fructose 6-phosphate pocket. Beta-D-fructose 1-phosphate contacts are provided by residues Thr109–Ser110, Glu153, Ser179–Gly181, and Glu347. Keto-D-fructose 6-phosphate is bound by residues Ser179–Ser183 and Glu347. An essential for interaction with GCK region spans residues Ile462 to Phe464. Residue Lys513 coordinates keto-D-fructose 6-phosphate. Beta-D-fructose 1-phosphate is bound at residue Lys513.

It belongs to the GCKR family. Interacts (fructose 6-phosphate bound form) with gck.

The protein resides in the nucleus. Its subcellular location is the cytoplasm. It localises to the mitochondrion. In terms of biological role, regulates glucokinase (gck) by forming an inactive complex with this enzyme. The affinity of gckr for gck is modulated by fructose metabolites: gckr with bound fructose 6-phosphate has increased affinity for gck, while gckr with bound fructose 1-phosphate has strongly decreased affinity for gck and does not inhibit gck activity. The chain is Glucokinase regulatory protein from Xenopus laevis (African clawed frog).